Consider the following 170-residue polypeptide: CFA/I fimbrial subunit B (170 aa).

A signal peptide spans Met1–Ala23.

This sequence belongs to the fimbrial CS1 protein family. CFA/I fimbriae are rather rigid, thread-like filaments of 0.5-1 micrometer, with an apparent axial hole, and a diameter of 7 nanometers. A single CFA/I fimbria consists of about 100 identical protein subunits.

Its subcellular location is the fimbrium. Functionally, fimbriae (also called pili), polar filaments radiating from the surface of the bacterium to a length of 0.5-1.5 micrometers and numbering 100-300 per cell, enable bacteria to colonize the epithelium of specific host organs. This Escherichia coli protein is CFA/I fimbrial subunit B (cfaB).